A 214-amino-acid polypeptide reads, in one-letter code: Adenylate kinase (214 aa).

An ATP-binding site is contributed by 10–15; it reads GAGKGT. The tract at residues 30 to 59 is NMP; it reads STGDMLRAAIKAGTELGKQAKAVIDAGQLV. AMP-binding positions include Thr-31, Arg-36, 57-59, 85-88, and Gln-92; these read QLV and GFPR. The LID stretch occupies residues 122-159; sequence GRRAHLPSGRTYHVVYNPPKVEGKDDVTGEDLVVRDDD. Residues Arg-123 and 132 to 133 contribute to the ATP site; that span reads TY. AMP is bound by residues Arg-156 and Arg-167. Lys-200 contributes to the ATP binding site.

It belongs to the adenylate kinase family. As to quaternary structure, monomer.

Its subcellular location is the cytoplasm. It carries out the reaction AMP + ATP = 2 ADP. Its pathway is purine metabolism; AMP biosynthesis via salvage pathway; AMP from ADP: step 1/1. In terms of biological role, catalyzes the reversible transfer of the terminal phosphate group between ATP and AMP. Plays an important role in cellular energy homeostasis and in adenine nucleotide metabolism. The sequence is that of Adenylate kinase from Vibrio vulnificus (strain CMCP6).